A 284-amino-acid chain; its full sequence is Small ribosomal subunit protein uS5y/uS5u/uS5v (284 aa).

A compositionally biased stretch (basic and acidic residues) spans 1–19 (MAERGGESGAERGGDRGDF). The interval 1–51 (MAERGGESGAERGGDRGDFGRGFGGGRGGGRGRDRGPRGRGRRGGRASEET) is disordered. Over residues 20–29 (GRGFGGGRGG) the composition is skewed to gly residues. Residues 95–158 (LKDEVMKIMP…ILAKLSVVPV (64 aa)) form the S5 DRBM domain.

It belongs to the universal ribosomal protein uS5 family.

This chain is Small ribosomal subunit protein uS5y/uS5u/uS5v (RPS2B), found in Arabidopsis thaliana (Mouse-ear cress).